The chain runs to 440 residues: Xaa-Pro dipeptidase (440 aa).

Mn(2+) is bound by residues Asp-241, Asp-252, His-333, Glu-378, and Glu-417.

Belongs to the peptidase M24B family. Bacterial-type prolidase subfamily. Requires Mn(2+) as cofactor.

The catalysed reaction is Xaa-L-Pro dipeptide + H2O = an L-alpha-amino acid + L-proline. In terms of biological role, splits dipeptides with a prolyl residue in the C-terminal position. This is Xaa-Pro dipeptidase from Glaesserella parasuis serovar 5 (strain SH0165) (Haemophilus parasuis).